Consider the following 213-residue polypeptide: 3-isopropylmalate dehydratase small subunit (213 aa).

This sequence belongs to the LeuD family. LeuD type 1 subfamily. Heterodimer of LeuC and LeuD.

It catalyses the reaction (2R,3S)-3-isopropylmalate = (2S)-2-isopropylmalate. The protein operates within amino-acid biosynthesis; L-leucine biosynthesis; L-leucine from 3-methyl-2-oxobutanoate: step 2/4. Catalyzes the isomerization between 2-isopropylmalate and 3-isopropylmalate, via the formation of 2-isopropylmaleate. This chain is 3-isopropylmalate dehydratase small subunit, found in Neisseria meningitidis serogroup C (strain 053442).